A 340-amino-acid chain; its full sequence is Immunoglobulin-binding protein 1 (340 aa).

Residues 47–61 (LELLEKAAGMLSQLD) enclose the UIM domain. The interaction with PPP2CA stretch occupies residues 99–203 (RLDHLQRARE…YLLHLRRWIG (105 aa)). Disordered regions lie at residues 221-242 (DKDS…PPMK) and 281-340 (LPDR…QNMG). Residues 226–291 (REESACQSSL…PDRGIAKPPS (66 aa)) are interaction with MID1. An N6-acetyllysine modification is found at K242. Residues 292 to 301 (ADFQRAAQQQ) are compositionally biased toward low complexity. Residues 302-312 (EDQEQKDEENE) are compositionally biased toward acidic residues. Over residues 313 to 330 (EKALHRMREWDDWKDTHP) the composition is skewed to basic and acidic residues.

It belongs to the IGBP1/TAP42 family. Interacts with partially folded PPP2CA, but not with the fully active protein. Interacts with PPP2CB, and with PP4 and PP6. Interacts with MID1 and MID2. Interacts with ubiquitin. Post-translationally, phosphorylated. Monoubiquitination by MID1 triggers calpain-mediated cleavage and switches IGBP1 activity from protective to destructive.

It is found in the cytoplasm. Functionally, associated to surface IgM-receptor; may be involved in signal transduction. Involved in regulation of the catalytic activity of the phosphatases PP2A, PP4 and PP6 by protecting their partially folded catalytic subunits from degradative polyubiquitination until they associate with regulatory subunits. The chain is Immunoglobulin-binding protein 1 (Igbp1) from Rattus norvegicus (Rat).